We begin with the raw amino-acid sequence, 394 residues long: 4-hydroxyphenylpyruvate dioxygenase (394 aa).

VOC domains follow at residues G27–R161 and H193–K351. Residues H196, H279, and E362 each contribute to the Fe cation site.

Belongs to the 4HPPD family. The cofactor is Fe cation.

It catalyses the reaction 3-(4-hydroxyphenyl)pyruvate + O2 = homogentisate + CO2. Its pathway is amino-acid degradation; L-phenylalanine degradation; acetoacetate and fumarate from L-phenylalanine: step 3/6. This Yarrowia lipolytica (strain CLIB 122 / E 150) (Yeast) protein is 4-hydroxyphenylpyruvate dioxygenase.